A 269-amino-acid chain; its full sequence is MPELPEVETSRRGIEPHLVGATILHAHIRNGRLRWPVSDEIYRLSDTPVLSVQRRAKYLLLELPDGWIIIHLGMSGSLRILSEALPAEKHDHVDLVMSNGKILRYTDPRRFGAWLWTKELEGHNVLAHLGPEPLSDEFNGEYLQQKCAKKKTAIKPWLMDNKLVVGVGNIYASESLFAAGIHPDRLASSLSTEECDLLARVIKAVLLRSIEQGGTTLKDFLQGDGKPGYFAQELQVYGRKGEPCRVCGTPIAATKHAQRATFYCRHCQK.

Pro2 acts as the Schiff-base intermediate with DNA in catalysis. Glu3 acts as the Proton donor in catalysis. Lys57 (proton donor; for beta-elimination activity) is an active-site residue. Residues His90, Arg109, and Lys150 each coordinate DNA. The segment at 235–269 (QVYGRKGEPCRVCGTPIAATKHAQRATFYCRHCQK) adopts an FPG-type zinc-finger fold. Catalysis depends on Arg259, which acts as the Proton donor; for delta-elimination activity.

This sequence belongs to the FPG family. As to quaternary structure, monomer. Requires Zn(2+) as cofactor.

The enzyme catalyses Hydrolysis of DNA containing ring-opened 7-methylguanine residues, releasing 2,6-diamino-4-hydroxy-5-(N-methyl)formamidopyrimidine.. It carries out the reaction 2'-deoxyribonucleotide-(2'-deoxyribose 5'-phosphate)-2'-deoxyribonucleotide-DNA = a 3'-end 2'-deoxyribonucleotide-(2,3-dehydro-2,3-deoxyribose 5'-phosphate)-DNA + a 5'-end 5'-phospho-2'-deoxyribonucleoside-DNA + H(+). In terms of biological role, involved in base excision repair of DNA damaged by oxidation or by mutagenic agents. Acts as a DNA glycosylase that recognizes and removes damaged bases. Has a preference for oxidized purines, such as 7,8-dihydro-8-oxoguanine (8-oxoG). Has AP (apurinic/apyrimidinic) lyase activity and introduces nicks in the DNA strand. Cleaves the DNA backbone by beta-delta elimination to generate a single-strand break at the site of the removed base with both 3'- and 5'-phosphates. This chain is Formamidopyrimidine-DNA glycosylase, found in Salmonella paratyphi B (strain ATCC BAA-1250 / SPB7).